The following is a 363-amino-acid chain: tRNA/tmRNA (uracil-C(5))-methyltransferase (363 aa).

The S-adenosyl-L-methionine site is built by Gln187, Tyr215, Asn220, Glu236, and Asp296. Cys321 functions as the Nucleophile in the catalytic mechanism. Glu355 (proton acceptor) is an active-site residue.

This sequence belongs to the class I-like SAM-binding methyltransferase superfamily. RNA M5U methyltransferase family. TrmA subfamily.

The catalysed reaction is uridine(54) in tRNA + S-adenosyl-L-methionine = 5-methyluridine(54) in tRNA + S-adenosyl-L-homocysteine + H(+). It carries out the reaction uridine(341) in tmRNA + S-adenosyl-L-methionine = 5-methyluridine(341) in tmRNA + S-adenosyl-L-homocysteine + H(+). Its function is as follows. Dual-specificity methyltransferase that catalyzes the formation of 5-methyluridine at position 54 (m5U54) in all tRNAs, and that of position 341 (m5U341) in tmRNA (transfer-mRNA). This chain is tRNA/tmRNA (uracil-C(5))-methyltransferase, found in Pseudomonas aeruginosa (strain UCBPP-PA14).